The sequence spans 145 residues: 3-dehydroquinate dehydratase (145 aa).

Catalysis depends on Tyr-24, which acts as the Proton acceptor. Positions 76, 82, and 89 each coordinate substrate. His-102 (proton donor) is an active-site residue. Residues 103–104 (LS) and Arg-113 contribute to the substrate site.

The protein belongs to the type-II 3-dehydroquinase family. Homododecamer.

It catalyses the reaction 3-dehydroquinate = 3-dehydroshikimate + H2O. It participates in metabolic intermediate biosynthesis; chorismate biosynthesis; chorismate from D-erythrose 4-phosphate and phosphoenolpyruvate: step 3/7. Functionally, catalyzes a trans-dehydration via an enolate intermediate. The polypeptide is 3-dehydroquinate dehydratase (Nitrosomonas eutropha (strain DSM 101675 / C91 / Nm57)).